Consider the following 475-residue polypeptide: Ribulose bisphosphate carboxylase large chain (475 aa).

A propeptide spanning residues 1–2 (MS) is cleaved from the precursor. Pro3 is subject to N-acetylproline. Lys14 carries the N6,N6,N6-trimethyllysine modification. Residues Asn123 and Thr173 each coordinate substrate. Residue Lys175 is the Proton acceptor of the active site. Lys177 contributes to the substrate binding site. Mg(2+) is bound by residues Lys201, Asp203, and Glu204. N6-carboxylysine is present on Lys201. The active-site Proton acceptor is the His294. Positions 295, 327, and 379 each coordinate substrate.

It belongs to the RuBisCO large chain family. Type I subfamily. In terms of assembly, heterohexadecamer of 8 large chains and 8 small chains; disulfide-linked. The disulfide link is formed within the large subunit homodimers. Mg(2+) is required as a cofactor. In terms of processing, the disulfide bond which can form in the large chain dimeric partners within the hexadecamer appears to be associated with oxidative stress and protein turnover.

The protein resides in the plastid. It localises to the chloroplast. It carries out the reaction 2 (2R)-3-phosphoglycerate + 2 H(+) = D-ribulose 1,5-bisphosphate + CO2 + H2O. It catalyses the reaction D-ribulose 1,5-bisphosphate + O2 = 2-phosphoglycolate + (2R)-3-phosphoglycerate + 2 H(+). Functionally, ruBisCO catalyzes two reactions: the carboxylation of D-ribulose 1,5-bisphosphate, the primary event in carbon dioxide fixation, as well as the oxidative fragmentation of the pentose substrate in the photorespiration process. Both reactions occur simultaneously and in competition at the same active site. The chain is Ribulose bisphosphate carboxylase large chain from Magnolia macrophylla (Bigleaf magnolia).